A 437-amino-acid polypeptide reads, in one-letter code: tRNA-2-methylthio-N(6)-dimethylallyladenosine synthase (437 aa).

Positions 1–115 (MKVYIETMGC…ISQVIHKEKA (115 aa)) constitute an MTTase N-terminal domain. Cys10, Cys46, Cys78, Cys148, Cys152, and Cys155 together coordinate [4Fe-4S] cluster. Residues 134–367 (KKAQIRSLLN…QNRHKEILEE (234 aa)) enclose the Radical SAM core domain. The region spanning 370–436 (KLEVGKTHVV…KGRLIATAKG (67 aa)) is the TRAM domain.

It belongs to the methylthiotransferase family. MiaB subfamily. Monomer. It depends on [4Fe-4S] cluster as a cofactor.

It is found in the cytoplasm. The enzyme catalyses N(6)-dimethylallyladenosine(37) in tRNA + (sulfur carrier)-SH + AH2 + 2 S-adenosyl-L-methionine = 2-methylsulfanyl-N(6)-dimethylallyladenosine(37) in tRNA + (sulfur carrier)-H + 5'-deoxyadenosine + L-methionine + A + S-adenosyl-L-homocysteine + 2 H(+). Its function is as follows. Catalyzes the methylthiolation of N6-(dimethylallyl)adenosine (i(6)A), leading to the formation of 2-methylthio-N6-(dimethylallyl)adenosine (ms(2)i(6)A) at position 37 in tRNAs that read codons beginning with uridine. The protein is tRNA-2-methylthio-N(6)-dimethylallyladenosine synthase of Helicobacter pylori (strain Shi470).